The primary structure comprises 386 residues: Methionine aminopeptidase 1 (386 aa).

Ala-2 carries the N-acetylalanine modification. The C6H2-type zinc-finger motif lies at 6–59 (TRVCETDGCSSEAKLQCPTCIKLGIQGSYFCSQECFKGSWATHKLLHKKAKDEK). Positions 9, 14, 22, 25, 36, 40, 48, and 52 each coordinate Zn(2+). His-203 is a binding site for a protein. Zn(2+) contacts are provided by Asp-220, Asp-231, and His-294. His-301 contacts a protein. Zn(2+)-binding residues include Glu-327 and Glu-358.

This sequence belongs to the peptidase M24A family. Methionine aminopeptidase type 1 subfamily. In terms of assembly, associates with the 60S ribosomal subunit of the 80S translational complex. Requires Zn(2+) as cofactor. Co(2+) is required as a cofactor. The cofactor is Mn(2+). Fe(2+) serves as cofactor.

The protein resides in the cytoplasm. It carries out the reaction Release of N-terminal amino acids, preferentially methionine, from peptides and arylamides.. In terms of biological role, cotranslationally removes the N-terminal methionine from nascent proteins. The N-terminal methionine is often cleaved when the second residue in the primary sequence is small and uncharged (Met-Ala-, Cys, Gly, Pro, Ser, Thr, or Val). Required for normal progression through the cell cycle. In Homo sapiens (Human), this protein is Methionine aminopeptidase 1 (METAP1).